Consider the following 395-residue polypeptide: GPI-anchor transamidase (395 aa).

The first 27 residues, 1 to 27 (MAVTDSLSRAATVLATVLLLSFGSVAA), serve as a signal peptide directing secretion. The Lumenal segment spans residues 28-368 (SHIEDQAEQF…PKLKDWHPPG (341 aa)). The Ca(2+) site is built by D79, I82, E118, and D120. H164 (proton donor) is an active-site residue. C206 (nucleophile; acyl-thioester intermediate) is an active-site residue. C206, S232, and S234 together coordinate a protein. An autoinhibitory loop region spans residues 231-236 (DSLSHQ). An intrachain disulfide couples C275 to C280. The chain crosses the membrane as a helical span at residues 369 to 385 (GFILGLWALIIMVFFKT). Residues 386-395 (YGIKHMKFIF) lie on the Cytoplasmic side of the membrane.

This sequence belongs to the peptidase C13 family. Heteropentamer. Part of the GPI-anchor transamidase complex, consisting of PIGK, PIGT, PIGS, PIGU and GAA1. Interacts with GPAA1. Interacts with PIGT; this interaction, via a disulfide link, stabilizes the expression of GAA1 and PIGK and links them to PIGS. The disulfide bond between PIGK/GPI8 and PIGT is important for normal enzyme activity.

The protein localises to the endoplasmic reticulum membrane. It participates in glycolipid biosynthesis; glycosylphosphatidylinositol-anchor biosynthesis. Its activity is regulated as follows. In the absence of proproteins substrates, exists in an inactive state with a disrupted catalytic site by an autoinhibitory loop. The binding of proprotein substrates, particularly the CSP region, to GPI-T triggers concerted conformational changes that alleviate the inhibition by the autoinhibitory loop. Meanwhile, proprotein residues near the omega- site induce the formation of a catalytic cleft for catalysis, following which the products are released and GPI-T reverts to the inactive state. In terms of biological role, catalytic subunit of the glycosylphosphatidylinositol-anchor (GPI-anchor) transamidase (GPI-T) complex that catalyzes the formation of the linkage between a proprotein and a GPI-anchor and participates in GPI anchored protein biosynthesis. Recognizes diverse proproteins at a C-terminal signal peptide (CSP) region that lacks consensus sequence and replaces it with a GPI-anchor via a transamidation reaction. Transamidation catalysis reaction follows a two-phase mechanism. In the acyl-enzyme phase, the carbonyl group of the proproteins's omega-site undergoes a nucleophilic attack forming an enzyme-substrate thioester bond. Followed by a general acid catalysis that allows CSP releasing, regenerating the carbonyl, and forming the acyl-enzyme intermediate. In the GPI-anchor attachment phase, the amino group of the GPI-anchor's ethanolamine phosphate, the one on third mannose (EtNP3), mediates a nucleophilic attack on the carbonyl of the acyl-enzyme intermediate, replacing the CSP, allowing GPI-anchor attachment to the omega-residue, therefore forming the product and freeing the enzyme. In Homo sapiens (Human), this protein is GPI-anchor transamidase.